We begin with the raw amino-acid sequence, 201 residues long: Putative 3-methyladenine DNA glycosylase (201 aa).

The protein belongs to the DNA glycosylase MPG family.

The sequence is that of Putative 3-methyladenine DNA glycosylase from Nitrosococcus oceani (strain ATCC 19707 / BCRC 17464 / JCM 30415 / NCIMB 11848 / C-107).